Reading from the N-terminus, the 298-residue chain is Lipoyl synthase (298 aa).

Positions 43, 48, 54, 69, 73, 76, and 280 each coordinate [4Fe-4S] cluster. One can recognise a Radical SAM core domain in the interval 55–269 (FSSGTATFLI…AACGRGMGIP (215 aa)).

This sequence belongs to the radical SAM superfamily. Lipoyl synthase family. The cofactor is [4Fe-4S] cluster.

Its subcellular location is the cytoplasm. It carries out the reaction [[Fe-S] cluster scaffold protein carrying a second [4Fe-4S](2+) cluster] + N(6)-octanoyl-L-lysyl-[protein] + 2 oxidized [2Fe-2S]-[ferredoxin] + 2 S-adenosyl-L-methionine + 4 H(+) = [[Fe-S] cluster scaffold protein] + N(6)-[(R)-dihydrolipoyl]-L-lysyl-[protein] + 4 Fe(3+) + 2 hydrogen sulfide + 2 5'-deoxyadenosine + 2 L-methionine + 2 reduced [2Fe-2S]-[ferredoxin]. It functions in the pathway protein modification; protein lipoylation via endogenous pathway; protein N(6)-(lipoyl)lysine from octanoyl-[acyl-carrier-protein]: step 2/2. Functionally, catalyzes the radical-mediated insertion of two sulfur atoms into the C-6 and C-8 positions of the octanoyl moiety bound to the lipoyl domains of lipoate-dependent enzymes, thereby converting the octanoylated domains into lipoylated derivatives. This is Lipoyl synthase from Nitratidesulfovibrio vulgaris (strain DP4) (Desulfovibrio vulgaris).